The chain runs to 666 residues: Calpain-10 (666 aa).

Residues 13–321 enclose the Calpain catalytic domain; the sequence is LFRDAAFPAS…FDEVTIGYPV (309 aa). Active-site residues include Cys73, His238, and Asn263. 2 domain III regions span residues 322–488 and 507–648; these read TEAG…ISLS and EWET…IHSQ.

It belongs to the peptidase C2 family. As to expression, ubiquitous.

The protein localises to the cytoplasm. Its subcellular location is the nucleus. Its function is as follows. Calcium-regulated non-lysosomal thiol-protease which catalyzes limited proteolysis of substrates involved in cytoskeletal remodeling and signal transduction. May play a role in insulin-stimulated glucose uptake. The polypeptide is Calpain-10 (Capn10) (Rattus norvegicus (Rat)).